The chain runs to 717 residues: Transport/processing ATP-binding protein ComA (717 aa).

One can recognise a Peptidase C39 domain in the interval 11–138 (QVDQMDCGVA…EEWTGVTLFM (128 aa)). Residue C17 is part of the active site. 6 consecutive transmembrane segments (helical) span residues 166–186 (GLIANIVLATLLVTVINIVGS), 205–225 (LGIISIGLVIVYIFQQILSYA), 237–257 (LSIDVILSYIKHVFHLPMSFF), 282–302 (TILSIFLDVSTVVIISLVLFS), 306–326 (NLFFMTLLALPIYTVIIFAFM), and 397–417 (VAHLLLNVGILWMGAVLVMDG). The 283-residue stretch at 168–450 (IANIVLATLL…IINLQTKLQT (283 aa)) folds into the ABC transmembrane type-1 domain. An ABC transporter domain is found at 484–717 (MTFKQVHYKY…GGFYAHLVNS (234 aa)). 517 to 524 (GISGSGKT) lines the ATP pocket.

This sequence belongs to the ABC transporter superfamily. Competence factor exporter (TC 3.A.1.112.1) family.

The protein resides in the cell membrane. Its function is as follows. Required for induction of competence. Seems to transport the competence-stimulating peptide (CSP). The sequence is that of Transport/processing ATP-binding protein ComA (comA) from Streptococcus pneumoniae serotype 4 (strain ATCC BAA-334 / TIGR4).